A 331-amino-acid polypeptide reads, in one-letter code: UPF0324 membrane protein YdhF (331 aa).

8 helical membrane passes run 2–20, 24–46, 82–104, 114–136, 148–170, 204–226, 247–269, and 308–330; these read SILP…SYLL, IFHS…NLYF, LGFS…VLFM, VSAL…VEPV, IAMV…TWMF, TLAT…YFGF, SFLP…IHFV, and LIYG…SLLI.

Belongs to the UPF0324 family.

It localises to the cell membrane. The chain is UPF0324 membrane protein YdhF (ydhF) from Lactococcus lactis subsp. lactis (strain IL1403) (Streptococcus lactis).